The following is a 360-amino-acid chain: Geranylgeranyl pyrophosphate synthase 12, chloroplastic (360 aa).

The transit peptide at 1 to 39 directs the protein to the chloroplast; sequence MANTVHLSSSSLFIQTRGRKYNSILSFNNLQKRTVLSLS. 3 residues coordinate isopentenyl diphosphate: Lys-106, Arg-109, and His-138. The Mg(2+) site is built by Asp-145 and Asp-151. Arg-156 contributes to the dimethylallyl diphosphate binding site. Residue Arg-157 coordinates isopentenyl diphosphate. The dimethylallyl diphosphate site is built by Lys-245, Thr-246, Gln-283, Lys-300, and Lys-310.

Belongs to the FPP/GGPP synthase family. As to quaternary structure, monomer. Mg(2+) serves as cofactor.

The protein localises to the plastid. Its subcellular location is the chloroplast. It catalyses the reaction isopentenyl diphosphate + dimethylallyl diphosphate = (2E)-geranyl diphosphate + diphosphate. It carries out the reaction isopentenyl diphosphate + (2E)-geranyl diphosphate = (2E,6E)-farnesyl diphosphate + diphosphate. The catalysed reaction is isopentenyl diphosphate + (2E,6E)-farnesyl diphosphate = (2E,6E,10E)-geranylgeranyl diphosphate + diphosphate. The protein operates within isoprenoid biosynthesis; farnesyl diphosphate biosynthesis; farnesyl diphosphate from geranyl diphosphate and isopentenyl diphosphate: step 1/1. Its pathway is isoprenoid biosynthesis; geranyl diphosphate biosynthesis; geranyl diphosphate from dimethylallyl diphosphate and isopentenyl diphosphate: step 1/1. It functions in the pathway isoprenoid biosynthesis; geranylgeranyl diphosphate biosynthesis; geranylgeranyl diphosphate from farnesyl diphosphate and isopentenyl diphosphate: step 1/1. Functionally, catalyzes the trans-addition of the three molecules of IPP onto DMAPP to form geranylgeranyl pyrophosphate. This Arabidopsis thaliana (Mouse-ear cress) protein is Geranylgeranyl pyrophosphate synthase 12, chloroplastic.